The following is a 442-amino-acid chain: tRNA modification GTPase MnmE (442 aa).

Residues R24, E82, and K120 each contribute to the (6S)-5-formyl-5,6,7,8-tetrahydrofolate site. In terms of domain architecture, TrmE-type G spans 217–367; it reads GLHIVITGEP…LISLIKKKAE (151 aa). GTP is bound by residues 227–232, 246–252, and 271–274; these read NVGKST, SEYAGTT, and DTAG. S231 contributes to the Mg(2+) binding site. Position 246 (S246) interacts with K(+). T252 contacts Mg(2+). K442 is a binding site for (6S)-5-formyl-5,6,7,8-tetrahydrofolate.

The protein belongs to the TRAFAC class TrmE-Era-EngA-EngB-Septin-like GTPase superfamily. TrmE GTPase family. As to quaternary structure, homodimer. Heterotetramer of two MnmE and two MnmG subunits. Requires K(+) as cofactor.

It localises to the cytoplasm. Exhibits a very high intrinsic GTPase hydrolysis rate. Involved in the addition of a carboxymethylaminomethyl (cmnm) group at the wobble position (U34) of certain tRNAs, forming tRNA-cmnm(5)s(2)U34. In Wolbachia pipientis subsp. Culex pipiens (strain wPip), this protein is tRNA modification GTPase MnmE.